Reading from the N-terminus, the 432-residue chain is 3-phosphoshikimate 1-carboxyvinyltransferase (432 aa).

Residues lysine 23, serine 24, and arginine 28 each coordinate 3-phosphoshikimate. Position 23 (lysine 23) interacts with phosphoenolpyruvate. Residues glycine 95 and arginine 123 each contribute to the phosphoenolpyruvate site. Serine 167, glutamine 169, aspartate 317, and lysine 344 together coordinate 3-phosphoshikimate. Glutamine 169 is a binding site for phosphoenolpyruvate. Catalysis depends on aspartate 317, which acts as the Proton acceptor. Phosphoenolpyruvate is bound by residues arginine 348 and arginine 390.

This sequence belongs to the EPSP synthase family. Monomer.

The protein resides in the cytoplasm. The enzyme catalyses 3-phosphoshikimate + phosphoenolpyruvate = 5-O-(1-carboxyvinyl)-3-phosphoshikimate + phosphate. The protein operates within metabolic intermediate biosynthesis; chorismate biosynthesis; chorismate from D-erythrose 4-phosphate and phosphoenolpyruvate: step 6/7. In terms of biological role, catalyzes the transfer of the enolpyruvyl moiety of phosphoenolpyruvate (PEP) to the 5-hydroxyl of shikimate-3-phosphate (S3P) to produce enolpyruvyl shikimate-3-phosphate and inorganic phosphate. The protein is 3-phosphoshikimate 1-carboxyvinyltransferase of Staphylococcus aureus (strain bovine RF122 / ET3-1).